A 180-amino-acid polypeptide reads, in one-letter code: NAD(P)H-quinone oxidoreductase subunit I, chloroplastic (180 aa).

4Fe-4S ferredoxin-type domains lie at 55–84 (GRIHFEFDKCIACEVCVRVCPIDLPVVNWR) and 95–124 (LNYSIDFGICIFCGNCVEYCPTNCLSMTEE). Cys64, Cys67, Cys70, Cys74, Cys104, Cys107, Cys110, and Cys114 together coordinate [4Fe-4S] cluster.

It belongs to the complex I 23 kDa subunit family. NDH is composed of at least 16 different subunits, 5 of which are encoded in the nucleus. It depends on [4Fe-4S] cluster as a cofactor.

The protein localises to the plastid. Its subcellular location is the chloroplast thylakoid membrane. It carries out the reaction a plastoquinone + NADH + (n+1) H(+)(in) = a plastoquinol + NAD(+) + n H(+)(out). The enzyme catalyses a plastoquinone + NADPH + (n+1) H(+)(in) = a plastoquinol + NADP(+) + n H(+)(out). Functionally, NDH shuttles electrons from NAD(P)H:plastoquinone, via FMN and iron-sulfur (Fe-S) centers, to quinones in the photosynthetic chain and possibly in a chloroplast respiratory chain. The immediate electron acceptor for the enzyme in this species is believed to be plastoquinone. Couples the redox reaction to proton translocation, and thus conserves the redox energy in a proton gradient. This is NAD(P)H-quinone oxidoreductase subunit I, chloroplastic from Platanus occidentalis (Sycamore).